Consider the following 118-residue polypeptide: Beta-2-microglobulin (118 aa).

The signal sequence occupies residues 1–21; that stretch reads MGSRWGIAVLGLFCFVSCLEA. One can recognise an Ig-like C1-type domain in the interval 26 to 113; that stretch reads PKIQVYSRHP…VHEGVKKTVK (88 aa). Cys46 and Cys101 are oxidised to a cystine.

Belongs to the beta-2-microglobulin family. In terms of assembly, heterodimer of an alpha chain and a beta chain. Beta-2-microglobulin is the beta-chain of major histocompatibility complex class I molecules.

It localises to the secreted. Component of the class I major histocompatibility complex (MHC). Involved in the presentation of peptide antigens to the immune system. This Ornithorhynchus anatinus (Duckbill platypus) protein is Beta-2-microglobulin (B2M).